The primary structure comprises 163 residues: MRLTSKGRYAVTAMLDVALNSEAGPVPLADISERQGISLSYLEQLFSRLRKNGLVSSVRGPGGGYLLGKDAGSIAVGEVISAVDESVDATRCQGKGGCQGGDKCLTHALWRDLSDRLTGFLNNITLGELVNNQEVLDVSDRQHTHDAPRSTRTQDAIDVKLRA.

The HTH rrf2-type domain maps to 2–131 (RLTSKGRYAV…NNITLGELVN (130 aa)). Residues 28–51 (LADISERQGISLSYLEQLFSRLRK) constitute a DNA-binding region (H-T-H motif). Residues cysteine 92, cysteine 98, and cysteine 104 each contribute to the [2Fe-2S] cluster site. Over residues 140–149 (DRQHTHDAPR) the composition is skewed to basic and acidic residues. The segment at 140–163 (DRQHTHDAPRSTRTQDAIDVKLRA) is disordered.

[2Fe-2S] cluster serves as cofactor.

Functionally, regulates the transcription of several operons and genes involved in the biogenesis of Fe-S clusters and Fe-S-containing proteins. The chain is HTH-type transcriptional regulator IscR from Citrobacter koseri (strain ATCC BAA-895 / CDC 4225-83 / SGSC4696).